The chain runs to 144 residues: (R)-specific enoyl-CoA hydratase (144 aa).

A MaoC-like domain is found at 13–128; that stretch reads DIKEGQSASL…TFRTTCTVAG (116 aa).

In terms of assembly, homotetramer.

The enzyme catalyses a (3R)-3-hydroxyacyl-CoA = a (2E)-enoyl-CoA + H2O. Catalyzes the hydration of trans-2-enoyl-CoAs with a chain-length of 4-6 carbon atoms, forming the corresponding (3R)-3-hydroxyacyl-CoAs, which can then be utilized for the production of polyhydroxyalkanoates (PHA) polymers. Cannot use trans-2,3-octenoyl-CoA as substrate. The sequence is that of (R)-specific enoyl-CoA hydratase from Rhodospirillum rubrum (strain ATCC 11170 / ATH 1.1.1 / DSM 467 / LMG 4362 / NCIMB 8255 / S1).